Reading from the N-terminus, the 217-residue chain is Pre-mRNA-splicing factor sap62 (217 aa).

The segment at 54 to 84 (FECRLCLTTHANENSYLTHTQGKKHQTNLAR) adopts a Matrin-type zinc-finger fold.

Belongs to the SF3A2 family. Belongs to the 40S cdc5-associated complex (or cwf complex), a spliceosome sub-complex reminiscent of a late-stage spliceosome composed of the U2, U5 and U6 snRNAs and at least brr2, cdc5, cwf2/prp3, cwf3/syf1, cwf4/syf3, cwf5/ecm2, spp42/cwf6, cwf7/spf27, cwf8, cwf9, cwf10, cwf11, cwf12, prp45/cwf13, cwf14, cwf15, cwf16, cwf17, cwf18, cwf19, cwf20, cwf21, cwf22, cwf23, cwf24, cwf25, cwf26, cyp7/cwf27, cwf28, cwf29/ist3, lea1, msl1, prp5/cwf1, prp10, prp12/sap130, prp17, prp22, sap61, sap62, sap114, sap145, slu7, smb1, smd1, smd3, smf1, smg1 and syf2.

The protein localises to the nucleus. The protein resides in the cytoplasm. Functionally, involved in mRNA splicing where it associates with cdc5 and the other cwf proteins as part of the spliceosome. The polypeptide is Pre-mRNA-splicing factor sap62 (sap62) (Schizosaccharomyces pombe (strain 972 / ATCC 24843) (Fission yeast)).